The following is a 333-amino-acid chain: DNA repair and recombination protein RadA (333 aa).

An ATP-binding site is contributed by 127–134 (GEFGSGKT).

The protein belongs to the eukaryotic RecA-like protein family.

In terms of biological role, involved in DNA repair and in homologous recombination. Binds and assemble on single-stranded DNA to form a nucleoprotein filament. Hydrolyzes ATP in a ssDNA-dependent manner and promotes DNA strand exchange between homologous DNA molecules. In Pyrobaculum aerophilum (strain ATCC 51768 / DSM 7523 / JCM 9630 / CIP 104966 / NBRC 100827 / IM2), this protein is DNA repair and recombination protein RadA.